Reading from the N-terminus, the 155-residue chain is UPF0178 protein mlr0875 (155 aa).

The protein belongs to the UPF0178 family.

The protein is UPF0178 protein mlr0875 of Mesorhizobium japonicum (strain LMG 29417 / CECT 9101 / MAFF 303099) (Mesorhizobium loti (strain MAFF 303099)).